Consider the following 770-residue polypeptide: Glutamate carboxypeptidase 2 homolog (770 aa).

Residues 1 to 19 (MPYVGVGAQKASTNLTGGP) are Cytoplasmic-facing. A helical; Signal-anchor for type II membrane protein transmembrane segment spans residues 20 to 40 (MMKAYAFVLAFFLLGLGVLAL). At 41-770 (GKHHSGRRFN…CVVNTLRDVI (730 aa)) the chain is on the extracellular side. N-linked (GlcNAc...) asparagine glycans are attached at residues Asn175 and Asn337. The interval 282–597 (SKKELFKGRT…QYWAELAKTF (316 aa)) is catalytic. 2 residues coordinate Zn(2+): His387 and Asp397. An N-linked (GlcNAc...) asparagine glycan is attached at Asn417. The Nucleophile role is filled by Glu435. Residues Glu436 and Asp464 each contribute to the Zn(2+) site. N-linked (GlcNAc...) asparagine glycosylation is found at Asn469 and Asn551. His562 serves as a coordination point for Zn(2+). N-linked (GlcNAc...) asparagine glycans are attached at residues Asn606 and Asn630.

Belongs to the peptidase M28 family. M28B subfamily. It depends on Zn(2+) as a cofactor.

The protein resides in the membrane. It catalyses the reaction Release of an unsubstituted, C-terminal glutamyl residue, typically from Ac-Asp-Glu or folylpoly-gamma-glutamates.. The polypeptide is Glutamate carboxypeptidase 2 homolog (Caenorhabditis briggsae).